Consider the following 532-residue polypeptide: Berberine bridge enzyme-like 23 (532 aa).

Residues 1–22 form the signal peptide; that stretch reads MRTLEAFALSLFLVFLVKWVNS. A disulfide bond links C36 and C102. A glycan (N-linked (GlcNAc...) asparagine) is linked at N78. The FAD-binding PCMH-type domain maps to 80–256; that stretch reads TSQKPILIVT…LSWKVKLVRV (177 aa). A cross-link (6-(S-cysteinyl)-8alpha-(pros-histidyl)-FAD (His-Cys)) is located at residues 117–180; sequence HDYEGLSYLS…KIHGFPAGTC (64 aa). N-linked (GlcNAc...) asparagine glycans are attached at residues N272 and N487.

Belongs to the oxygen-dependent FAD-linked oxidoreductase family. FAD is required as a cofactor. The FAD cofactor is bound via a bicovalent 6-S-cysteinyl, 8alpha-N1-histidyl FAD linkage. Accumulates in cell walls of etiolated hypocotyls.

Its subcellular location is the secreted. The protein resides in the cell wall. This chain is Berberine bridge enzyme-like 23, found in Arabidopsis thaliana (Mouse-ear cress).